Here is a 234-residue protein sequence, read N- to C-terminus: CD-NTase-associated protein 13 (234 aa).

Residues 20 to 42 form a helical membrane-spanning segment; it reads TIMKNVIANVSTAITLALMILWI.

This sequence in the C-terminal section; belongs to the bacterial STING family.

Its subcellular location is the cell inner membrane. Functionally, effector protein of a CBASS antivirus system. CBASS (cyclic oligonucleotide-based antiphage signaling system) provides immunity against bacteriophage. The CD-NTase protein synthesizes cyclic nucleotides in response to infection; these serve as specific second messenger signals. The signals activate a diverse range of effectors, leading to bacterial cell death and thus abortive phage infection. A type I-D CBASS(GG) system. Its function is as follows. Binds c-di-GMP (synthesized by the cognate CdnE encoded upstream in the same operon) and about 10-fold less well 3'3'-cGAMP, but not c-di-AMP, 2'3'-cGAMP or cUMP-AMP (tested with a protein without the transmembrane region). The effector protein for this CBASS system, its activity is stimulated by c-di-GMP and leads to cell death. The polypeptide is CD-NTase-associated protein 13 (Roseivirga ehrenbergii (strain DSM 102268 / JCM 13514 / KCTC 12282 / NCIMB 14502 / KMM 6017)).